We begin with the raw amino-acid sequence, 149 residues long: 3-dehydroquinate dehydratase (149 aa).

Tyrosine 22 acts as the Proton acceptor in catalysis. Residues asparagine 74, histidine 80, and aspartate 87 each contribute to the substrate site. The active-site Proton donor is histidine 100. Substrate contacts are provided by residues 101–102 and arginine 111; that span reads MS.

The protein belongs to the type-II 3-dehydroquinase family. In terms of assembly, homododecamer.

The enzyme catalyses 3-dehydroquinate = 3-dehydroshikimate + H2O. It participates in metabolic intermediate biosynthesis; chorismate biosynthesis; chorismate from D-erythrose 4-phosphate and phosphoenolpyruvate: step 3/7. In terms of biological role, catalyzes a trans-dehydration via an enolate intermediate. The polypeptide is 3-dehydroquinate dehydratase (Leptothrix cholodnii (strain ATCC 51168 / LMG 8142 / SP-6) (Leptothrix discophora (strain SP-6))).